Reading from the N-terminus, the 110-residue chain is uncharacterized protein (110 aa).

The chain crosses the membrane as a helical span at residues 29 to 49; it reads GLAFIFFFLVAFYFFPAFWDL.

It localises to the membrane. This is an uncharacterized protein from Saccharomyces cerevisiae (strain ATCC 204508 / S288c) (Baker's yeast).